A 367-amino-acid chain; its full sequence is Inositol-3-phosphate synthase (367 aa).

The NAD(+) site is built by Asp78, Ala137, Tyr157, Ser200, Asp235, and Lys248.

Belongs to the myo-inositol 1-phosphate synthase family. It depends on NAD(+) as a cofactor.

The catalysed reaction is D-glucose 6-phosphate = 1D-myo-inositol 3-phosphate. In terms of biological role, key enzyme in myo-inositol biosynthesis pathway that catalyzes the conversion of glucose 6-phosphate to 1D-myo-inositol 3-phosphate in a NAD-dependent manner. The polypeptide is Inositol-3-phosphate synthase (ino1) (Mycobacterium tuberculosis (strain CDC 1551 / Oshkosh)).